The chain runs to 1271 residues: Clustered mitochondria protein homolog (1271 aa).

TPR repeat units lie at residues 104–138 (RHKP…ELGE) and 502–535 (CYGL…KPHK). The 252-residue stretch at 329-580 (DQSRPQLSIL…RSTPLDIDFI (252 aa)) folds into the Clu domain. The segment covering 729-763 (QEEKSKIEDNEKAIEEEKKEEKTEKKEEKEEKADE) has biased composition (basic and acidic residues). The segment at 729–783 (QEEKSKIEDNEKAIEEEKKEEKTEKKEEKEEKADEEKSENEEDKTKPEEPSKGVF) is disordered. 3 TPR repeats span residues 1067 to 1100 (ISSY…WDFV), 1109 to 1142 (VTTL…SEKI), and 1151 to 1184 (AMIH…FSRH). The segment at 1212-1271 (QAKDKNKPKKVKAPPVPPQATTKKSKNKSKMAQTQISKLHLNSSTRFSSSSRVKPRLKKK) is disordered. Polar residues predominate over residues 1241 to 1253 (KMAQTQISKLHLN). Residues 1254–1263 (SSTRFSSSSR) show a composition bias toward low complexity.

Belongs to the CLU family. In terms of assembly, may associate with the eukaryotic translation initiation factor 3 (eIF-3) complex.

The protein resides in the cytoplasm. Functionally, mRNA-binding protein involved in proper cytoplasmic distribution of mitochondria. The protein is Clustered mitochondria protein homolog of Meyerozyma guilliermondii (strain ATCC 6260 / CBS 566 / DSM 6381 / JCM 1539 / NBRC 10279 / NRRL Y-324) (Yeast).